A 225-amino-acid chain; its full sequence is Suppressor of cytokine signaling 3 (225 aa).

Positions 22–33 are kinase inhibitory region (KIR); the sequence is LKTFSSKSEYQL. The extended SH2 subdomain (ESS) stretch occupies residues 34 to 45; that stretch reads VVNAVRKLQESG. Residues 46-142 enclose the SH2 domain; the sequence is FYWSAVTGGE…APSFPSPPTE (97 aa). Residues 131–142 are compositionally biased toward pro residues; the sequence is PGAPSFPSPPTE. Positions 131-162 are disordered; that stretch reads PGAPSFPSPPTEPSSEVPEQPSAQPLPGSPPR. A compositionally biased stretch (low complexity) spans 143–155; that stretch reads PSSEVPEQPSAQP. The SOCS box domain maps to 177-224; sequence VLSRPLSSNVATLQHLCRKTVNGHLDSYEKVTQLPGPIREFLDQYDAP.

As to quaternary structure, interacts with multiple activated proteins of the tyrosine kinase signaling pathway including IGF1 receptor, insulin receptor and JAK2. Binding to JAK2 is mediated through the KIR and SH2 domains to a phosphorylated tyrosine residue within the JAK2 JH1 domain. Binds specific activated tyrosine residues of the leptin, EPO, IL12, GSCF and gp130 receptors. Interaction with CSNK1E stabilizes SOCS3 protein. Component of the probable ECS(SOCS3) E3 ubiquitin-protein ligase complex which contains CUL5, RNF7/RBX2, Elongin BC complex and SOCS3. Interacts with CUL5, RNF7, ELOB and ELOC. Interacts with CUL2. Interacts with FGFR3. Interacts with INSR. Interacts with BCL10; this interaction may interfere with BCL10-binding with PELI2. Interacts with NOD2 (via CARD domain); the interaction promotes NOD2 degradation. In terms of processing, phosphorylated on tyrosine residues after stimulation by the cytokines, IL-2, EPO or IGF1. In terms of tissue distribution, widely expressed with high expression in heart, placenta, skeletal muscle, peripheral blood leukocytes, fetal and adult lung, and fetal liver and kidney. Lower levels in thymus.

It functions in the pathway protein modification; protein ubiquitination. Its function is as follows. SOCS family proteins form part of a classical negative feedback system that regulates cytokine signal transduction. SOCS3 is involved in negative regulation of cytokines that signal through the JAK/STAT pathway. Inhibits cytokine signal transduction by binding to tyrosine kinase receptors including IL6ST/gp130, LIF, erythropoietin, insulin, IL12, GCSF and leptin receptors. Binding to JAK2 inhibits its kinase activity and regulates IL6 signaling. Suppresses fetal liver erythropoiesis. Regulates onset and maintenance of allergic responses mediated by T-helper type 2 cells. Probable substrate recognition component of a SCF-like ECS (Elongin BC-CUL2/5-SOCS-box protein) E3 ubiquitin-protein ligase complex which mediates the ubiquitination and subsequent proteasomal degradation of target proteins. This chain is Suppressor of cytokine signaling 3, found in Homo sapiens (Human).